The primary structure comprises 200 residues: Proteasome subunit beta 2 (200 aa).

Position 1 (methionine 1) is a propeptide, removed in mature form; by autocatalysis. Threonine 2 serves as the catalytic Nucleophile.

The protein belongs to the peptidase T1B family. The 20S proteasome core is composed of 14 alpha and 14 beta subunits that assemble into four stacked heptameric rings, resulting in a barrel-shaped structure. The two inner rings, each composed of seven catalytic beta subunits, are sandwiched by two outer rings, each composed of seven alpha subunits. The catalytic chamber with the active sites is on the inside of the barrel. Has a gated structure, the ends of the cylinder being occluded by the N-termini of the alpha-subunits. Is capped at one or both ends by the proteasome regulatory ATPase, PAN.

Its subcellular location is the cytoplasm. The enzyme catalyses Cleavage of peptide bonds with very broad specificity.. The formation of the proteasomal ATPase PAN-20S proteasome complex, via the docking of the C-termini of PAN into the intersubunit pockets in the alpha-rings, triggers opening of the gate for substrate entry. Interconversion between the open-gate and close-gate conformations leads to a dynamic regulation of the 20S proteasome proteolysis activity. Component of the proteasome core, a large protease complex with broad specificity involved in protein degradation. The chain is Proteasome subunit beta 2 from Pyrobaculum islandicum (strain DSM 4184 / JCM 9189 / GEO3).